A 204-amino-acid chain; its full sequence is Viral interleukin-6 homolog (204 aa).

The first 22 residues, 1–22 (MRWFKLWSILLVGSLLVSGTRG), serve as a signal peptide directing secretion.

Belongs to the IL-6 superfamily. In terms of assembly, interacts with host IL6ST.

In terms of biological role, initiates signal transduction through binding to interleukin-6 receptor subunit beta IL6ST, independently of the cognate IL6 receptor IL6R. In infected primary effusion lymphoma cells, promotes proliferation of cells, protects them from apoptosis, and promotes immune evasion of interferon activity. Also drives blood to lymphatic endothelial cell differentiation. The chain is Viral interleukin-6 homolog (K2) from Homo sapiens (Human).